The chain runs to 230 residues: Phosphoribosylformylglycinamidine synthase subunit PurQ (230 aa).

One can recognise a Glutamine amidotransferase type-1 domain in the interval 3-230 (SAIIVFPGTN…LFQSIVESLS (228 aa)). C87 serves as the catalytic Nucleophile. Catalysis depends on residues H204 and E206.

As to quaternary structure, part of the FGAM synthase complex composed of 1 PurL, 1 PurQ and 2 PurS subunits.

Its subcellular location is the cytoplasm. The enzyme catalyses N(2)-formyl-N(1)-(5-phospho-beta-D-ribosyl)glycinamide + L-glutamine + ATP + H2O = 2-formamido-N(1)-(5-O-phospho-beta-D-ribosyl)acetamidine + L-glutamate + ADP + phosphate + H(+). The catalysed reaction is L-glutamine + H2O = L-glutamate + NH4(+). It participates in purine metabolism; IMP biosynthesis via de novo pathway; 5-amino-1-(5-phospho-D-ribosyl)imidazole from N(2)-formyl-N(1)-(5-phospho-D-ribosyl)glycinamide: step 1/2. In terms of biological role, part of the phosphoribosylformylglycinamidine synthase complex involved in the purines biosynthetic pathway. Catalyzes the ATP-dependent conversion of formylglycinamide ribonucleotide (FGAR) and glutamine to yield formylglycinamidine ribonucleotide (FGAM) and glutamate. The FGAM synthase complex is composed of three subunits. PurQ produces an ammonia molecule by converting glutamine to glutamate. PurL transfers the ammonia molecule to FGAR to form FGAM in an ATP-dependent manner. PurS interacts with PurQ and PurL and is thought to assist in the transfer of the ammonia molecule from PurQ to PurL. The polypeptide is Phosphoribosylformylglycinamidine synthase subunit PurQ (Rhodospirillum rubrum (strain ATCC 11170 / ATH 1.1.1 / DSM 467 / LMG 4362 / NCIMB 8255 / S1)).